We begin with the raw amino-acid sequence, 80 residues long: DNA-directed RNA polymerase RPB10 homolog (80 aa).

Zn(2+) is bound by residues Cys-7, Cys-10, Cys-65, and Cys-66.

The protein belongs to the archaeal RpoN/eukaryotic RPB10 RNA polymerase subunit family. As to quaternary structure, part of the viral DNA-directed RNA polymerase that consists of 8 polII-like subunits (RPB1, RPB2, RPB3, RPB5, RPB6, RPB7, RPB9, RPB10), a capping enzyme and a termination factor.

The protein localises to the host cytoplasm. Functionally, component of the DNA-directed RNA polymerase (RNAP) that catalyzes the transcription in the cytoplasm of viral DNA into RNA using the four ribonucleoside triphosphates as substrates. This African swine fever virus (isolate Pig/Kenya/KEN-50/1950) (ASFV) protein is DNA-directed RNA polymerase RPB10 homolog.